The sequence spans 813 residues: G-type lectin S-receptor-like serine/threonine-protein kinase LECRK1 (813 aa).

Positions 1-19 (MVALLLFPMLLQLLSPTCA) are cleaved as a signal peptide. Residues 20–466 (QTQKNITLGS…NRKHWVLGSS (447 aa)) lie on the Extracellular side of the membrane. One can recognise a Bulb-type lectin domain in the interval 22–149 (QKNITLGSTL…DGTTKWQTFD (128 aa)). Residues Asn24, Asn57, Asn164, Asn168, Asn219, and Asn242 are each glycosylated (N-linked (GlcNAc...) asparagine). The 54-residue stretch at 293 to 346 (PQNICHAIVSDVGSGVCGFNSYCTFDGTRNQIASCQCPPWYKFFDEQKKYKGCK) folds into the EGF-like; atypical domain. 5 cysteine pairs are disulfide-bonded: Cys297/Cys315, Cys309/Cys327, Cys329/Cys345, Cys391/Cys413, and Cys395/Cys401. The region spanning 354 to 433 (CDLDEATALA…NMADYVQRTV (80 aa)) is the PAN domain. N-linked (GlcNAc...) asparagine glycosylation is found at Asn407 and Asn441. Residues 467–487 (LILGTSILVNFALISIFLFGT) form a helical membrane-spanning segment. The Cytoplasmic segment spans residues 488–813 (YCRIATKKNI…DPCSFISSLP (326 aa)). The region spanning 523 to 797 (AGFHEILGAG…KVTQMLDGAV (275 aa)) is the Protein kinase domain. ATP-binding positions include 529 to 537 (LGAGASGVV) and Lys553. Asp647 serves as the catalytic Proton acceptor.

This sequence belongs to the protein kinase superfamily. Ser/Thr protein kinase family.

The protein localises to the membrane. It carries out the reaction L-seryl-[protein] + ATP = O-phospho-L-seryl-[protein] + ADP + H(+). The enzyme catalyses L-threonyl-[protein] + ATP = O-phospho-L-threonyl-[protein] + ADP + H(+). Its function is as follows. Involved in innate immunity. Required for the expression of defense-related genes PR1A, LOX2 and CHS1 upon biotic stresses. Required for basal resistance to the fungal blast (M.grisea), bacterial blight (X.oryzae pv. oryzae, Xoo) and the herbivorous insect brown planthopper (N.lugens, BPH). May be involved in several defense signaling pathways. Involved in the promotion of seed germination. Required for the expression of alpha-amylase genes during seed germination. Involved in resistance against the herbivorous insect brown planthopper (N.lugens, BPH). Member of the BPH3 (BPH resistance locus 3) cluster which contains LECRK1, LECRK2 and LECRK3. The polypeptide is G-type lectin S-receptor-like serine/threonine-protein kinase LECRK1 (Oryza sativa subsp. japonica (Rice)).